A 197-amino-acid polypeptide reads, in one-letter code: Probable GTP-binding protein EngB (197 aa).

Positions N22 to E195 constitute an EngB-type G domain. GTP contacts are provided by residues G30–S37, G57–L61, D75–G78, T142–D145, and F174–S176. Mg(2+) contacts are provided by S37 and T59.

Belongs to the TRAFAC class TrmE-Era-EngA-EngB-Septin-like GTPase superfamily. EngB GTPase family. The cofactor is Mg(2+).

Necessary for normal cell division and for the maintenance of normal septation. The chain is Probable GTP-binding protein EngB from Clostridium perfringens (strain 13 / Type A).